Here is a 383-residue protein sequence, read N- to C-terminus: Acetylornithine deacetylase (383 aa).

His-80 provides a ligand contact to Zn(2+). Asp-82 is an active-site residue. Asp-112 contacts Zn(2+). The active site involves Glu-144. Zn(2+) is bound by residues Glu-145, Glu-169, and His-355.

Belongs to the peptidase M20A family. ArgE subfamily. Homodimer. Zn(2+) serves as cofactor. The cofactor is Co(2+). It depends on glutathione as a cofactor.

The protein resides in the cytoplasm. The enzyme catalyses N(2)-acetyl-L-ornithine + H2O = L-ornithine + acetate. The protein operates within amino-acid biosynthesis; L-arginine biosynthesis; L-ornithine from N(2)-acetyl-L-ornithine (linear): step 1/1. Its function is as follows. Catalyzes the hydrolysis of the amide bond of N(2)-acetylated L-amino acids. Cleaves the acetyl group from N-acetyl-L-ornithine to form L-ornithine, an intermediate in L-arginine biosynthesis pathway, and a branchpoint in the synthesis of polyamines. The protein is Acetylornithine deacetylase of Shigella flexneri serotype 5b (strain 8401).